The chain runs to 161 residues: Sterile alpha motif domain-containing protein 12 (161 aa).

The segment at 44 to 64 is disordered; that stretch reads QKVPDQKGTPKRLQGEAETAK. The SAM domain maps to 77–143; the sequence is WTQQDVCKWL…LQQVLQLKVR (67 aa).

The polypeptide is Sterile alpha motif domain-containing protein 12 (Samd12) (Mus musculus (Mouse)).